Here is a 269-residue protein sequence, read N- to C-terminus: Acyl-CoA-binding domain-containing protein 4 (269 aa).

The 90-residue stretch at 12–101 (CQKQFQAAVS…MKLVAQKVID (90 aa)) folds into the ACB domain. Residues 23–32 (IQNLPKNGSY), 43–47 (YSYYK), K69, and Y88 contribute to the an acyl-CoA site. Disordered stretches follow at residues 150 to 175 (GAVS…PRDL), 195 to 226 (EQRA…QCSA), and 248 to 269 (VALP…SAAN). Pro residues predominate over residues 156–167 (PCLPKEPAPPSP). 2 positions are modified to phosphoserine: S166 and S171.

Functionally, binds medium- and long-chain acyl-CoA esters and may function as an intracellular carrier of acyl-CoA esters. This chain is Acyl-CoA-binding domain-containing protein 4 (ACBD4), found in Pongo abelii (Sumatran orangutan).